We begin with the raw amino-acid sequence, 449 residues long: Clusterin (449 aa).

The N-terminal stretch at 1-21 (MKTLLLLVGLLLTLENGQVLG) is a signal peptide. The Nuclear localization signal signature appears at 77–80 (KKKK). N-linked (GlcNAc...) asparagine glycosylation is found at Asn85 and Asn102. 5 disulfide bridges follow: Cys101–Cys313, Cys112–Cys305, Cys115–Cys302, Cys120–Cys295, and Cys128–Cys285. Residue Ser132 is modified to Phosphoserine. Asn144, Asn291, Asn328, Asn354, and Asn374 each carry an N-linked (GlcNAc...) asparagine glycan. Ser396 carries the phosphoserine modification. Residues 443-447 (RQKNR) carry the Nuclear localization signal motif.

This sequence belongs to the clusterin family. Antiparallel disulfide-linked heterodimer of an alpha chain and a beta chain. Self-associates and forms higher oligomers. Interacts with a broad range of misfolded proteins, including APP, APOC2 and LYZ. Slightly acidic pH promotes interaction with misfolded proteins. Forms high-molecular weight oligomers upon interaction with misfolded proteins. Interacts with APOA1, LRP2, CLUAP1 and PON1. Interacts with the complement membrane attack complex. Interacts (via alpha chain) with XRCC6. Interacts with SYVN1, COMMD1, BTRC, CUL1 and with ubiquitin and SCF (SKP1-CUL1-F-box protein) E3 ubiquitin-protein ligase complexes. Interacts (via alpha chain) with BAX in stressed cells, where BAX undergoes a conformation change leading to association with the mitochondrial membrane. Does not interact with BAX in unstressed cells. Found in a complex with LTF, CLU, EPPIN and SEMG1. Interacts (immaturely glycosylated pre-secreted form) with HSPA5; this interaction promotes CLU stability and facilitates stress-induced CLU retrotranslocation from the secretory pathway to the mitochondria, thereby reducing stress-induced apoptosis by stabilizing mitochondrial membrane integrity. Interacts with BCL2L1; this interaction releases and activates BAX and promotes cell death. Interacts with TGFBR2 and ACVR1. Interacts (secreted form) with STMN3; this interaction may act as an important modulator during neuronal differentiation. Interacts with VLDLR and LRP8. In terms of processing, proteolytically cleaved on its way through the secretory system, probably within the Golgi lumen. Proteolytic cleavage is not necessary for its chaperone activity. All non-secreted forms are not proteolytically cleaved. Chaperone activity of uncleaved forms is dependent on a non-reducing environment. Polyubiquitinated, leading to proteasomal degradation. Under cellular stress, the intracellular level of cleaved form is reduced due to proteasomal degradation. Post-translationally, heavily N-glycosylated. About 30% of the protein mass is comprised of complex N-linked carbohydrate. Endoplasmic reticulum (ER) stress induces changes in glycosylation status and increases level of hypoglycosylated forms. Core carbohydrates are essential for chaperone activity. Non-secreted forms are hypoglycosylated or unglycosylated.

It is found in the secreted. Its subcellular location is the nucleus. It localises to the cytoplasm. The protein resides in the mitochondrion membrane. The protein localises to the cytosol. It is found in the microsome. Its subcellular location is the endoplasmic reticulum. It localises to the mitochondrion. The protein resides in the perinuclear region. The protein localises to the cytoplasmic vesicle. It is found in the secretory vesicle. Its subcellular location is the chromaffin granule. In terms of biological role, functions as extracellular chaperone that prevents aggregation of non native proteins. Prevents stress-induced aggregation of blood plasma proteins. Inhibits formation of amyloid fibrils by APP, APOC2, B2M, CALCA, CSN3, SNCA and aggregation-prone LYZ variants (in vitro). Does not require ATP. Maintains partially unfolded proteins in a state appropriate for subsequent refolding by other chaperones, such as HSPA8/HSC70. Does not refold proteins by itself. Binding to cell surface receptors triggers internalization of the chaperone-client complex and subsequent lysosomal or proteasomal degradation. When secreted, protects cells against apoptosis and against cytolysis by complement: inhibits assembly of the complement membrane attack complex (MAC) by preventing polymerization of C9 pore component of the MAC complex. Intracellular forms interact with ubiquitin and SCF (SKP1-CUL1-F-box protein) E3 ubiquitin-protein ligase complexes and promote the ubiquitination and subsequent proteasomal degradation of target proteins. Promotes proteasomal degradation of COMMD1 and IKBKB. Modulates NF-kappa-B transcriptional activity. Following stress, promotes apoptosis. Inhibits apoptosis when associated with the mitochondrial membrane by interference with BAX-dependent release of cytochrome c into the cytoplasm. Plays a role in the regulation of cell proliferation. An intracellular form suppresses stress-induced apoptosis by stabilizing mitochondrial membrane integrity through interaction with HSPA5. Secreted form does not affect caspase or BAX-mediated intrinsic apoptosis and TNF-induced NF-kappa-B-activity. Secreted form act as an important modulator during neuronal differentiation through interaction with STMN3. Plays a role in the clearance of immune complexes that arise during cell injury. This chain is Clusterin (CLU), found in Equus caballus (Horse).